The chain runs to 185 residues: Ribosome-recycling factor (185 aa).

This sequence belongs to the RRF family.

The protein localises to the cytoplasm. Responsible for the release of ribosomes from messenger RNA at the termination of protein biosynthesis. May increase the efficiency of translation by recycling ribosomes from one round of translation to another. The protein is Ribosome-recycling factor of Bacillus cereus (strain G9842).